The following is a 222-amino-acid chain: Probable fimbrial chaperone EcpB (222 aa).

Positions 1–20 (MKKHLLPLALLFSGISPAQA) are cleaved as a signal peptide.

The protein belongs to the EcpB/EcpE family.

Its function is as follows. Part of the ecpRABCDE operon, which encodes the E.coli common pilus (ECP). ECP is found in both commensal and pathogenic strains and plays a dual role in early-stage biofilm development and host cell recognition. The protein is Probable fimbrial chaperone EcpB (ecpB) of Escherichia coli O127:H6 (strain E2348/69 / EPEC).